The primary structure comprises 494 residues: Ketol-acid reductoisomerase (NADP(+)) (494 aa).

The KARI N-terminal Rossmann domain maps to 14 to 208 (LDQLGRCRFM…GGHRAGCLES (195 aa)). Residues 45 to 48 (CGAQ), arginine 68, arginine 76, serine 78, and 108 to 110 (DKQ) contribute to the NADP(+) site. Residue histidine 132 is part of the active site. Glycine 158 lines the NADP(+) pocket. 2 KARI C-terminal knotted domains span residues 209–344 (SFVA…NYPA) and 345–487 (SDVE…MSDM). 4 residues coordinate Mg(2+): aspartate 217, glutamate 221, glutamate 389, and glutamate 393. Residue serine 414 coordinates substrate.

This sequence belongs to the ketol-acid reductoisomerase family. The cofactor is Mg(2+).

The enzyme catalyses (2R)-2,3-dihydroxy-3-methylbutanoate + NADP(+) = (2S)-2-acetolactate + NADPH + H(+). It carries out the reaction (2R,3R)-2,3-dihydroxy-3-methylpentanoate + NADP(+) = (S)-2-ethyl-2-hydroxy-3-oxobutanoate + NADPH + H(+). It participates in amino-acid biosynthesis; L-isoleucine biosynthesis; L-isoleucine from 2-oxobutanoate: step 2/4. It functions in the pathway amino-acid biosynthesis; L-valine biosynthesis; L-valine from pyruvate: step 2/4. In terms of biological role, involved in the biosynthesis of branched-chain amino acids (BCAA). Catalyzes an alkyl-migration followed by a ketol-acid reduction of (S)-2-acetolactate (S2AL) to yield (R)-2,3-dihydroxy-isovalerate. In the isomerase reaction, S2AL is rearranged via a Mg-dependent methyl migration to produce 3-hydroxy-3-methyl-2-ketobutyrate (HMKB). In the reductase reaction, this 2-ketoacid undergoes a metal-dependent reduction by NADPH to yield (R)-2,3-dihydroxy-isovalerate. The chain is Ketol-acid reductoisomerase (NADP(+)) from Vibrio atlanticus (strain LGP32) (Vibrio splendidus (strain Mel32)).